A 1087-amino-acid polypeptide reads, in one-letter code: Formin-H (1087 aa).

Polar residues predominate over residues 1–23 (MSFDLESNSSGGSTIGRNSSIRL). The disordered stretch occupies residues 1-25 (MSFDLESNSSGGSTIGRNSSIRLSS). One can recognise a GBD/FH3 domain in the interval 34–394 (VSLNEIIDLD…QLEDELKIHP (361 aa)). Composition is skewed to low complexity over residues 416-436 (FGFG…SMAK) and 549-558 (SPGSTLSPSP). Disordered regions lie at residues 416–445 (FGFG…DNEE), 549–625 (SPGS…PAKP), and 1048–1087 (VDSL…QLKK). Residues 433-461 (SMAKTELKKDNEEKQKTIEHLLKQLNKFS) adopt a coiled-coil conformation. Positions 569–588 (FGITSSSIHTSTDKLTNSTE) are enriched in polar residues. Positions 589–615 (PILGSPPPPPPPPMSGGGGPPPPPPPP) constitute an FH1 domain. Over residues 592–616 (GSPPPPPPPPMSGGGGPPPPPPPPG) the composition is skewed to pro residues. Residues 623 to 1016 (AKPIIKPSVK…ENSKMEDPEK (394 aa)) enclose the FH2 domain. The region spanning 1013-1051 (DPEKGGLQDLSSQIRSGQLFKDRRVGDSVIAQMQNVDSL) is the DAD domain.

The protein belongs to the formin homology family. Diaphanous subfamily. As to quaternary structure, interacts with vasP, proB/profilin-2 and rac1A. Interacts (via GBD/FH3 domain) with activated Rho-GTPases.

The protein resides in the cytoplasm. Its subcellular location is the cell cortex. It localises to the cytoskeleton. Its function is as follows. Formins play an important role in the nucleation of actin and the formation of linear actin filaments. Important for cell migration and formation, elongation and maintenance of filopodia. Specifically controls filopodial dynamics by regulating actin turnover at the barbed ends of actin filaments. The protein is Formin-H (forH) of Dictyostelium discoideum (Social amoeba).